A 165-amino-acid chain; its full sequence is Small ribosomal subunit protein uS5 (165 aa).

The region spanning 13-76 (LEENVVSINR…EDAKRHLIKV (64 aa)) is the S5 DRBM domain.

This sequence belongs to the universal ribosomal protein uS5 family. In terms of assembly, part of the 30S ribosomal subunit. Contacts proteins S4 and S8.

Functionally, with S4 and S12 plays an important role in translational accuracy. Its function is as follows. Located at the back of the 30S subunit body where it stabilizes the conformation of the head with respect to the body. The polypeptide is Small ribosomal subunit protein uS5 (Oenococcus oeni (strain ATCC BAA-331 / PSU-1)).